The chain runs to 21 residues: 23S rRNA methylase leader peptide (21 aa).

Its function is as follows. Involved in erythromycin resistance. This is 23S rRNA methylase leader peptide from Corynebacterium diphtheriae.